A 351-amino-acid polypeptide reads, in one-letter code: Uroporphyrinogen decarboxylase (351 aa).

Substrate-binding positions include 25–29 (RQAGR), aspartate 74, tyrosine 151, serine 206, and histidine 325.

It belongs to the uroporphyrinogen decarboxylase family. Homodimer.

The protein localises to the cytoplasm. The catalysed reaction is uroporphyrinogen III + 4 H(+) = coproporphyrinogen III + 4 CO2. Its pathway is porphyrin-containing compound metabolism; protoporphyrin-IX biosynthesis; coproporphyrinogen-III from 5-aminolevulinate: step 4/4. Catalyzes the decarboxylation of four acetate groups of uroporphyrinogen-III to yield coproporphyrinogen-III. In Chlorobaculum parvum (strain DSM 263 / NCIMB 8327) (Chlorobium vibrioforme subsp. thiosulfatophilum), this protein is Uroporphyrinogen decarboxylase.